A 412-amino-acid polypeptide reads, in one-letter code: Motilin receptor (412 aa).

Over methionine 1 to leucine 35 the chain is Extracellular. N-linked (GlcNAc...) asparagine glycosylation is present at asparagine 6. Residues glycine 36 to asparagine 56 traverse the membrane as a helical segment. Over valine 57 to asparagine 74 the chain is Cytoplasmic. A helical transmembrane segment spans residues leucine 75 to aspartate 94. Residues leucine 95–arginine 112 lie on the Extracellular side of the membrane. The cysteines at positions 111 and 235 are disulfide-linked. The helical transmembrane segment at leucine 113–valine 134 threads the bilayer. At glutamate 135 to alanine 157 the chain is on the cytoplasmic side. A helical transmembrane segment spans residues leucine 158–glycine 178. At valine 179 to arginine 246 the chain is on the extracellular side. An N-linked (GlcNAc...) asparagine glycan is attached at asparagine 192. The chain crosses the membrane as a helical span at residues valine 247–isoleucine 270. Residues glycine 271–arginine 298 are Cytoplasmic-facing. The helical transmembrane segment at valine 299–isoleucine 320 threads the bilayer. Residues tyrosine 321–glutamine 334 are Extracellular-facing. Residues tyrosine 335–isoleucine 358 form a helical membrane-spanning segment. Residues serine 359–glycine 412 are Cytoplasmic-facing.

Belongs to the G-protein coupled receptor 1 family. In terms of tissue distribution, expressed only in thyroid, stomach, and bone marrow.

The protein resides in the cell membrane. Receptor for motilin. This chain is Motilin receptor (MLNR), found in Homo sapiens (Human).